A 229-amino-acid polypeptide reads, in one-letter code: UPF0173 metal-dependent hydrolase SH1218 (229 aa).

This sequence belongs to the UPF0173 family.

The protein is UPF0173 metal-dependent hydrolase SH1218 of Staphylococcus haemolyticus (strain JCSC1435).